We begin with the raw amino-acid sequence, 311 residues long: N-acetylmuramic acid 6-phosphate etherase (311 aa).

Positions 66–229 (VADRMARGGR…STITMIRLGK (164 aa)) constitute an SIS domain. Residue Glu-94 is the Proton donor of the active site. Residue Glu-125 is part of the active site.

Belongs to the GCKR-like family. MurNAc-6-P etherase subfamily. Homodimer.

The catalysed reaction is N-acetyl-D-muramate 6-phosphate + H2O = N-acetyl-D-glucosamine 6-phosphate + (R)-lactate. The protein operates within amino-sugar metabolism; N-acetylmuramate degradation. In terms of biological role, specifically catalyzes the cleavage of the D-lactyl ether substituent of MurNAc 6-phosphate, producing GlcNAc 6-phosphate and D-lactate. The polypeptide is N-acetylmuramic acid 6-phosphate etherase (Streptomyces avermitilis (strain ATCC 31267 / DSM 46492 / JCM 5070 / NBRC 14893 / NCIMB 12804 / NRRL 8165 / MA-4680)).